A 484-amino-acid chain; its full sequence is Replication-associated protein (484 aa).

The Nuclear localization signal motif lies at 146-153 (IRKYHQSV).

It localises to the host nucleus. In terms of biological role, plays an essential for the replication of viral DNA. Presumably cleaves viral genomic dsRNA replicative form to initiate rolling circle replication. The polypeptide is Replication-associated protein (Chaetoceros (Chaetoceros sp. DNA virus 7)).